Here is a 1116-residue protein sequence, read N- to C-terminus: ELKS/Rab6-interacting/CAST family member 1 (1116 aa).

The segment at 1-54 (MYGSARSVGKVEPSSQSPGRSPRLPRSPRLGHRRTNSTGGSSGSSVGGGSGKTL) is disordered. An N6-acetyllysine modification is found at Lys-10. A compositionally biased stretch (low complexity) spans 13 to 28 (PSSQSPGRSPRLPRSP). Residues Ser-17, Ser-21, and Ser-37 each carry the phosphoserine modification. Thr-38 carries the post-translational modification Phosphothreonine. Residues 40–51 (GSSGSSVGGGSG) are compositionally biased toward gly residues. 3 positions are modified to phosphoserine: Ser-55, Ser-75, and Ser-94. A coiled-coil region spans residues 144–988 (RQARDNTIMD…RMKLMADNYE (845 aa)). The span at 590–602 (KEKQMSSLKERVK) shows a compositional bias: basic and acidic residues. 2 disordered regions span residues 590–609 (KEKQ…ADTT) and 814–836 (ARRR…RKKD). A Phosphoserine modification is found at Ser-1005. The residue at position 1046 (Thr-1046) is a Phosphothreonine. Residues 1046-1108 (TPPASYNLDD…DHCPDILEQV (63 aa)) form the FIP-RBD domain. Residues 1060–1100 (WENELQKMTRGQLQDELEKGERDNAELQEFANAILQQIADH) adopt a coiled-coil conformation.

As to quaternary structure, part of a complex with CHUK, IKBKB and IKBKG. Interacts with CHUK, IKBKB and IKBKG. The interaction with IKBKG is independent of CHUK and IKBKB. Interacts with NFKBIA. Isoform 4 interacts with PPFIA1, and through its C-terminus with the PDZ domains of RIMS1 and RIMS2. Interacts with ERC2/CAST1. Interacts with the GTB-bound forms of RAB6A isoform 1 and isoform 2 and with RAB6B. The interaction was strongest with RAB6B, followed by RAB6A isoform 2 and weakest with RAB6A isoform 1. Interacts with SDCCAG8. Part of a cortical microtubule stabilization complex (CMSC) composed of KANK1, PPFIA1, PPFIBP1, ERC1/ELKS, PHLDB2/LL5beta, CLASPs, KIF21A and possibly additional interactors; within CMSCs KANK1 and PHLDB2/LL5beta appear to be the core components for targeting of microtubule-binding proteins KIF21A and CLASPs, whereas PPFIA1, PPFIBP1 and ERC1/ELKS serve as scaffolds for protein clustering. In terms of tissue distribution, widely expressed. Isoform 2 and isoform 4 are abundantly expressed in brain. Isoform 1 and isoform 3 are predominantly expressed in testis and thyroid, and isoform 1 predominates in other tissues tested.

It is found in the cytoplasm. It localises to the cytoskeleton. The protein localises to the microtubule organizing center. The protein resides in the centrosome. Its subcellular location is the membrane. It is found in the golgi apparatus membrane. It localises to the presynaptic cell membrane. The protein localises to the cell projection. The protein resides in the podosome. Functionally, regulatory subunit of the IKK complex. Probably recruits IkappaBalpha/NFKBIA to the complex. May be involved in the organization of the cytomatrix at the nerve terminals active zone (CAZ) which regulates neurotransmitter release. May be involved in vesicle trafficking at the CAZ. May be involved in Rab-6 regulated endosomes to Golgi transport. This Homo sapiens (Human) protein is ELKS/Rab6-interacting/CAST family member 1 (ERC1).